Reading from the N-terminus, the 352-residue chain is Protein-glutamate methylesterase/protein-glutamine glutaminase 2 (352 aa).

Residues methionine 1–glutamate 116 form the Response regulatory domain. Residue aspartate 50 is modified to 4-aspartylphosphate. Residues alanine 162–glutamine 352 enclose the CheB-type methylesterase domain. Active-site residues include serine 174, histidine 200, and aspartate 296.

It belongs to the CheB family. Phosphorylated by CheA. Phosphorylation of the N-terminal regulatory domain activates the methylesterase activity.

The protein resides in the cytoplasm. The enzyme catalyses [protein]-L-glutamate 5-O-methyl ester + H2O = L-glutamyl-[protein] + methanol + H(+). It catalyses the reaction L-glutaminyl-[protein] + H2O = L-glutamyl-[protein] + NH4(+). Its function is as follows. Involved in chemotaxis. Part of a chemotaxis signal transduction system that modulates chemotaxis in response to various stimuli. Catalyzes the demethylation of specific methylglutamate residues introduced into the chemoreceptors (methyl-accepting chemotaxis proteins or MCP) by CheR. Also mediates the irreversible deamidation of specific glutamine residues to glutamic acid. The sequence is that of Protein-glutamate methylesterase/protein-glutamine glutaminase 2 from Xanthomonas campestris pv. campestris (strain ATCC 33913 / DSM 3586 / NCPPB 528 / LMG 568 / P 25).